Consider the following 177-residue polypeptide: Prorelaxin (177 aa).

The signal sequence occupies residues M1–A25. 3 disulfides stabilise this stretch: C34/C164, C46/C177, and C163/C168. The propeptide at Q63–P149 is connecting peptide.

Belongs to the insulin family. As to quaternary structure, heterodimer of a B chain and an A chain linked by two disulfide bonds. Placenta; syncytiotrophoblast.

It is found in the secreted. Functionally, relaxin is an ovarian hormone that acts with estrogen to produce dilatation of the birth canal in many mammals. This is Prorelaxin (RLN) from Canis lupus familiaris (Dog).